The sequence spans 208 residues: Protein IncB (208 aa).

This protein is thought to be cis acting and to contain the putative attachment site on the DNA for the cellular partition apparatus. The sequence is that of Protein IncB (incB) from Escherichia coli.